The following is a 567-amino-acid chain: Geranylgeranyl transferase type-2 subunit alpha (567 aa).

PFTA repeat units follow at residues 44 to 78, 88 to 122, 124 to 158, 159 to 193, 207 to 241, and 363 to 397; these read LDES…RLEV, LVKA…RLPE, NWAR…QAAV, PPAE…QLHP, VLLK…RADP, and VLQS…ALDP. Ser98 is modified (phosphoserine). LRR repeat units follow at residues 442–463, 464–486, 487–508, 509–530, and 534–555; these read DVRV…EQLL, LVTH…AALR, CLEV…TNLP, RLQE…QPLA, and RLVL…SEHL.

Belongs to the protein prenyltransferase subunit alpha family. As to quaternary structure, heterotrimer composed of RABGGTA, RABGGTB and CHM; within this trimer, RABGGTA and RABGGTB form the catalytic component B, while CHM (component A) mediates peptide substrate binding. The Rab GGTase dimer (RGGT) interacts with CHM (component A) prior to Rab protein binding; the association is stabilized by geranylgeranyl pyrophosphate (GGpp). The CHM:RGGT:Rab complex is destabilized by GGpp. Interacts with non-phosphorylated form of RAB8A; phosphorylation of RAB8A disrupts this interaction.

It carries out the reaction geranylgeranyl diphosphate + L-cysteinyl-[protein] = S-geranylgeranyl-L-cysteinyl-[protein] + diphosphate. With respect to regulation, the enzymatic reaction requires the aid of a Rab escort protein (also called component A), such as CHM. Functionally, catalyzes the transfer of a geranylgeranyl moiety from geranylgeranyl diphosphate to both cysteines of Rab proteins with the C-terminal sequence -XXCC, -XCXC and -CCXX, such as RAB1A, RAB3A, RAB5A and RAB7A. This is Geranylgeranyl transferase type-2 subunit alpha (RABGGTA) from Sus scrofa (Pig).